The chain runs to 144 residues: Gonadotropin subunit beta-2 (144 aa).

A signal peptide spans 1-27 (MGTPVKILVVRNHILFSVVVLLAVAQS). 6 disulfide bridges follow: Cys33-Cys81, Cys47-Cys96, Cys50-Cys134, Cys58-Cys112, Cys62-Cys114, and Cys117-Cys124. An N-linked (GlcNAc...) asparagine glycan is attached at Asn37. The propeptide occupies 143–144 (VY).

This sequence belongs to the glycoprotein hormones subunit beta family. As to quaternary structure, heterodimer of an alpha and a beta chain.

Its subcellular location is the secreted. Functionally, involved in gametogenesis and steroidogenesis. In Cyprinus carpio (Common carp), this protein is Gonadotropin subunit beta-2 (cgbb).